We begin with the raw amino-acid sequence, 643 residues long: Alpha-dioxygenase 1 (643 aa).

His-167 serves as the catalytic Proton acceptor. Asp-168 lines the Ca(2+) pocket. His-172 is a heme b binding site. Ca(2+)-binding residues include Thr-220, Trp-222, Asp-224, and Ser-226. The heme b site is built by His-392, Arg-489, and Arg-493.

Belongs to the peroxidase family. The cofactor is heme b. It depends on Ca(2+) as a cofactor.

In terms of biological role, alpha-dioxygenase that catalyzes the primary oxygenation step of a variety of 14-20 carbon fatty acids, containing up to three unsaturated bonds, into their corresponding 2R-hydroperoxides. Involved in the production of oxylipins that function in cell signaling, wound healing, and protection from infection. The lipid-derived signaling pathway is involved in the initial response of hot pepper plants to pathogen infection. This chain is Alpha-dioxygenase 1, found in Capsicum annuum (Capsicum pepper).